Reading from the N-terminus, the 309-residue chain is MQGNKSTIREYKIVVVGGGGVGKSALTIQFIQSYFVDEYDPTIEDSYRKQVVIDDKVSILDILDTAGQEEYSAMREQYMRTGEGFLLVYSVTSRNSFDELLSYYQQIQRVKDSDYIPVVVVGNKLDLENERQVSYEDGLRLAKQLNAPFLETSAKQAINVDEAFYSLIRLVRDDGGKYNSMNRQLDNTNEIRDSELTSSATADREKKNNGSYVLDNSLTNAGTGSSSKSAVNHNGETTKRTDEKNYVNQNNNNEGNTKYSSNGNGNRSDISRGNQNNALNSRSKQSAEPQKNSSANARKESSGGCCIIC.

GTP is bound by residues 20 to 25 (GVGKSA), 36 to 42 (VDEYDPT), 66 to 67 (AG), 123 to 126 (NKLD), and 153 to 155 (SAK). The Effector region motif lies at 39-47 (YDPTIEDSY). Residues 177–303 (KYNSMNRQLD…SANARKESSG (127 aa)) form a disordered region. Composition is skewed to polar residues over residues 179–188 (NSMNRQLDNT) and 209–235 (NGSYVLDNSLTNAGTGSSSKSAVNHNG). The span at 236-245 (ETTKRTDEKN) shows a compositional bias: basic and acidic residues. The span at 246–256 (YVNQNNNNEGN) shows a compositional bias: low complexity. Residues 257 to 296 (TKYSSNGNGNRSDISRGNQNNALNSRSKQSAEPQKNSSAN) show a composition bias toward polar residues. Residue C305 is the site of S-palmitoyl cysteine attachment. C306 is subject to Cysteine methyl ester. C306 carries the S-farnesyl cysteine lipid modification. Positions 307-309 (IIC) are cleaved as a propeptide — removed in mature form.

The protein belongs to the small GTPase superfamily. Ras family. Farnesylated by RAM1-RAM2, which is required for targeting RAS1 to the cytoplasmic site of the endoplasmic reticulum, where proteolytic processing of the C-terminus by RCE1 and methylation of the resulting carboxyl group by STE14 occurs. Post-translationally, palmitoylated by the ERF2-SHR5 complex, which is required for proper plasma membrane localization of RAS1.

The protein resides in the cell membrane. It catalyses the reaction GTP + H2O = GDP + phosphate + H(+). Alternates between an inactive form bound to GDP and an active form bound to GTP. Activated by guanine nucleotide-exchange factor (GEF) CDC25 and inactivated by GTPase-activating proteins (GAPs) IRA1 and IRA2. The S.cerevisiae Ras proteins modulate the activity of the adenylate cyclase catalytic subunit and therefore affect the biosynthesis of cyclic-AMP. The sequence is that of Ras-like protein 1 (RAS1) from Saccharomyces cerevisiae (strain ATCC 204508 / S288c) (Baker's yeast).